The primary structure comprises 264 residues: Thymidylate synthase (264 aa).

DUMP is bound at residue Arg21. His51 contributes to the (6R)-5,10-methylene-5,6,7,8-tetrahydrofolate binding site. 126–127 contacts dUMP; that stretch reads RR. Cys146 (nucleophile) is an active-site residue. DUMP contacts are provided by residues 166 to 169, Asn177, and 207 to 209; these read RSAD and HIY. Asp169 contributes to the (6R)-5,10-methylene-5,6,7,8-tetrahydrofolate binding site. Residue Ala263 participates in (6R)-5,10-methylene-5,6,7,8-tetrahydrofolate binding.

Belongs to the thymidylate synthase family. Bacterial-type ThyA subfamily. As to quaternary structure, homodimer.

It localises to the cytoplasm. The enzyme catalyses dUMP + (6R)-5,10-methylene-5,6,7,8-tetrahydrofolate = 7,8-dihydrofolate + dTMP. It participates in pyrimidine metabolism; dTTP biosynthesis. In terms of biological role, catalyzes the reductive methylation of 2'-deoxyuridine-5'-monophosphate (dUMP) to 2'-deoxythymidine-5'-monophosphate (dTMP) while utilizing 5,10-methylenetetrahydrofolate (mTHF) as the methyl donor and reductant in the reaction, yielding dihydrofolate (DHF) as a by-product. This enzymatic reaction provides an intracellular de novo source of dTMP, an essential precursor for DNA biosynthesis. The protein is Thymidylate synthase of Brucella abortus (strain 2308).